Here is a 335-residue protein sequence, read N- to C-terminus: SLAM family member 7 (335 aa).

The signal sequence occupies residues 1 to 22 (MAGSPTCLTLIYILWQLTGSAA). One can recognise an Ig-like V-type domain in the interval 23–124 (SGPVKELVGS…PSTQEYVLHV (102 aa)). Topologically, residues 23 to 226 (SGPVKELVGS…GAADDPDSSM (204 aa)) are extracellular. Residues Asn98, Asn142, Asn148, Asn172, Asn176, and Asn204 are each glycosylated (N-linked (GlcNAc...) asparagine). The Ig-like C2-type domain maps to 131 to 206 (PKVTMGLQSN…ARNPVSRNFS (76 aa)). 2 disulfide bridges follow: Cys145-Cys215 and Cys151-Cys195. Residues 227–247 (VLLCLLLVPLLLSLFVLGLFL) form a helical membrane-spanning segment. The Cytoplasmic portion of the chain corresponds to 248 to 335 (WFLKRERQEE…PRLFAYENVI (88 aa)). The segment at 278–296 (SGENTEYDTIPHTNRTILK) is interaction with FYN when phosphorylated at Tyr-284. The ITSM signature appears at 302–307 (TVYSTV).

In terms of assembly, isoform 1 binds to SH2D1A when its cytoplasmic tail is phosphorylated in the presence of FYN (in vitro); low affinity binding, the physiological relevance of the interaction is questioned. Interacts with SH2D1B; in NK cells. Interacts (via ITSM phosphorylated on Tyr-302) with SH2D1B, PTPN6/SHP-1, PTPN11/SHP-2, INPP5D/SHIP1, CSK and FYN. As to expression, expressed in spleen, lymph node, peripheral blood leukocytes, bone marrow, small intestine, stomach, appendix, lung and trachea. Expression was detected in NK cells, activated B-cells, NK-cell line but not in promyelocytic, B-, or T-cell lines. Expressed in monocytes. Isoform 3 is expressed at much lower level than isoform 1.

Its subcellular location is the membrane. In terms of biological role, self-ligand receptor of the signaling lymphocytic activation molecule (SLAM) family. SLAM receptors triggered by homo- or heterotypic cell-cell interactions are modulating the activation and differentiation of a wide variety of immune cells and thus are involved in the regulation and interconnection of both innate and adaptive immune response. Activities are controlled by presence or absence of small cytoplasmic adapter proteins, SH2D1A/SAP and/or SH2D1B/EAT-2. Isoform 1 mediates NK cell activation through a SH2D1A-independent extracellular signal-regulated ERK-mediated pathway. Positively regulates NK cell functions by a mechanism dependent on phosphorylated SH2D1B. Downstream signaling implicates PLCG1, PLCG2 and PI3K. In addition to heterotypic NK cells-target cells interactions also homotypic interactions between NK cells may contribute to activation. However, in the absence of SH2D1B, inhibits NK cell function. Also acts inhibitory in T-cells. May play a role in lymphocyte adhesion. In LPS-activated monocytes negatively regulates production of pro-inflammatory cytokines. Its function is as follows. Isoform 3 does not mediate any NK cell activation. The chain is SLAM family member 7 (SLAMF7) from Homo sapiens (Human).